A 370-amino-acid polypeptide reads, in one-letter code: DNA replication and repair protein RecF (370 aa).

30-37 (GENAQGKT) contacts ATP.

This sequence belongs to the RecF family.

It is found in the cytoplasm. Its function is as follows. The RecF protein is involved in DNA metabolism; it is required for DNA replication and normal SOS inducibility. RecF binds preferentially to single-stranded, linear DNA. It also seems to bind ATP. The chain is DNA replication and repair protein RecF from Listeria innocua serovar 6a (strain ATCC BAA-680 / CLIP 11262).